Reading from the N-terminus, the 278-residue chain is Undecaprenyl-diphosphatase 1 (278 aa).

Transmembrane regions (helical) follow at residues 1-21 (MFFGILKAIILGIVEGITEFL), 43-63 (AFTTTFEYVIQLGAIIAVVLL), 83-103 (IWATWVKVVVGVIPSVIIGFL), 112-132 (LMNWLVVSIALIVYGIAFIFI), 192-212 (FSFFLSIPTMLGVSVLKIGSY), 224-244 (IVILLVGMFVSFVVAYVVIKW), and 257-277 (FGWYRIILGVLVIALGAIGII).

Belongs to the UppP family.

It is found in the cell membrane. It carries out the reaction di-trans,octa-cis-undecaprenyl diphosphate + H2O = di-trans,octa-cis-undecaprenyl phosphate + phosphate + H(+). Catalyzes the dephosphorylation of undecaprenyl diphosphate (UPP). Confers resistance to bacitracin. In Oenococcus oeni (strain ATCC BAA-331 / PSU-1), this protein is Undecaprenyl-diphosphatase 1.